Consider the following 918-residue polypeptide: Interleukin-6 receptor subunit beta (918 aa).

The first 22 residues, 1 to 22, serve as a signal peptide directing secretion; that stretch reads MSALRIWLMQALLIFLTTESIG. The Extracellular segment spans residues 23–618; sequence QLVEPCGYIY…TLKFAQGEIE (596 aa). One can recognise an Ig-like C2-type domain in the interval 26–120; the sequence is EPCGYIYPEF…IEQNVYGITI (95 aa). 2 cysteine pairs are disulfide-bonded: Cys28-Cys54 and Cys48-Cys103. N-linked (GlcNAc...) asparagine glycosylation is found at Asn43, Asn61, Asn83, and Asn131. 5 Fibronectin type-III domains span residues 125–215, 223–323, 328–418, 422–516, and 518–612; these read PPDI…NFDP, PPHN…TYED, APSF…IPGS, ASHP…LKQA, and PSKG…TLKF. An intrachain disulfide couples Cys134 to Cys144. N-linked (GlcNAc...) asparagine glycosylation occurs at Asn157. The cysteines at positions 172 and 181 are disulfide-linked. Asn205 and Asn226 each carry an N-linked (GlcNAc...) asparagine glycan. The WSXWS motif signature appears at 309–313; sequence WSDWS. N-linked (GlcNAc...) asparagine glycosylation is found at Asn382 and Asn389. A disulfide bond links Cys457 and Cys465. 2 N-linked (GlcNAc...) asparagine glycosylation sites follow: Asn477 and Asn552. A helical transmembrane segment spans residues 619 to 640; it reads AIVVPVCLAFLLTTLLGVLFCF. At 641-918 the chain is on the cytoplasmic side; it reads NKRDLIKKHI…TVRQGGYMPQ (278 aa). A Box 1 motif motif is present at residues 650-658; that stretch reads IWPNVPDPS. Disordered stretches follow at residues 659–679, 720–754, 773–795, and 817–842; these read KSHI…NSKD, TEGH…STAS, VQVF…PEDL, and SCSQ…GSEE. A phosphoserine mark is found at Ser660 and Ser666. Low complexity predominate over residues 730 to 751; sequence SSCMSSSRPSISSSEENESAQS. The segment covering 773–785 has biased composition (polar residues); that stretch reads VQVFSRSESTQPL. Phosphoserine is present on residues Ser781, Ser788, Ser828, and Ser838.

Belongs to the type I cytokine receptor family. Type 2 subfamily. Component of a hexamer of two molecules each of IL6, IL6R and IL6ST; associates with the complex IL6:IL6R but does not interact with IL6. Forms heterodimers composed of LIFR and IL6ST (type I OSM receptor) which are activated by LIF and OSM. Also forms heterodimers composed of OSMR and IL6ST (type II receptor) which are activated by OSM but not by LIF. Interacts with HCK. Interacts with INPP5D/SHIP1. Interacts with SRC and YES. Interacts with ARMH4; this interaction prevents IL6ST protein homodimerization and bridges ARMH4 with IL6R and STAT3 and therefore inhibits phosphorylation of STAT3 at 'Tyr-705'. In terms of processing, phosphorylation of Ser-781 down-regulates cell surface expression. Heavily N-glycosylated. Glycosylation is required for protein stability and localization in plasma membrane but not for ligand binding. Found in hepatocytes, astrocytes, fibroblasts and endothelial cells.

Its subcellular location is the cell membrane. Its function is as follows. Signal-transducing molecule. The receptor systems for IL6, LIF, OSM, CNTF, IL11, CTF1 and BSF3 can utilize IL6ST for initiating signal transmission. Binding of IL6 to IL6R induces IL6ST homodimerization and formation of a high-affinity receptor complex, which activates the intracellular JAK-MAPK and JAK-STAT3 signaling pathways. That causes phosphorylation of IL6ST tyrosine residues which in turn activates STAT3. In parallel, the IL6 signaling pathway induces the expression of two cytokine receptor signaling inhibitors, SOCS1 and SOCS3, which inhibit JAK and terminate the activity of the IL6 signaling pathway as a negative feedback loop. Also activates the yes-associated protein 1 (YAP) and NOTCH pathways to control inflammation-induced epithelial regeneration, independently of STAT3. Mediates signals which regulate immune response, hematopoiesis, pain control and bone metabolism. Has a role in embryonic development. Essential for survival of motor and sensory neurons and for differentiation of astrocytes. Required for expression of TRPA1 in nociceptive neurons. Required for the maintenance of PTH1R expression in the osteoblast lineage and for the stimulation of PTH-induced osteoblast differentiation. Required for normal trabecular bone mass and cortical bone composition. The chain is Interleukin-6 receptor subunit beta from Rattus norvegicus (Rat).